The primary structure comprises 110 residues: UPF0060 membrane protein Pcryo_1341 (110 aa).

4 helical membrane passes run 7–27, 33–53, 63–83, and 87–107; these read VGLF…PYLW, SIWL…LLTL, AAYG…VDGI, and TWDI…MFAP.

It belongs to the UPF0060 family.

The protein resides in the cell inner membrane. The protein is UPF0060 membrane protein Pcryo_1341 of Psychrobacter cryohalolentis (strain ATCC BAA-1226 / DSM 17306 / VKM B-2378 / K5).